A 143-amino-acid chain; its full sequence is Interferon gamma (143 aa).

At Gln1 the chain carries Pyrrolidone carboxylic acid. 2 N-linked (GlcNAc...) asparagine glycosylation sites follow: Asn25 and Asn97.

This sequence belongs to the type II (or gamma) interferon family. Homodimer. Interacts with IFNGR1 (via extracellular domain); this interaction promotes IFNGR1 dimerization.

Its subcellular location is the secreted. Its function is as follows. Type II interferon produced by immune cells such as T-cells and NK cells that plays crucial roles in antimicrobial, antiviral, and antitumor responses by activating effector immune cells and enhancing antigen presentation. Primarily signals through the JAK-STAT pathway after interaction with its receptor IFNGR1 to affect gene regulation. Upon IFNG binding, IFNGR1 intracellular domain opens out to allow association of downstream signaling components JAK2, JAK1 and STAT1, leading to STAT1 activation, nuclear translocation and transcription of IFNG-regulated genes. Many of the induced genes are transcription factors such as IRF1 that are able to further drive regulation of a next wave of transcription. Plays a role in class I antigen presentation pathway by inducing a replacement of catalytic proteasome subunits with immunoproteasome subunits. In turn, increases the quantity, quality, and repertoire of peptides for class I MHC loading. Increases the efficiency of peptide generation also by inducing the expression of activator PA28 that associates with the proteasome and alters its proteolytic cleavage preference. Up-regulates as well MHC II complexes on the cell surface by promoting expression of several key molecules such as cathepsins B/CTSB, H/CTSH, and L/CTSL. Participates in the regulation of hematopoietic stem cells during development and under homeostatic conditions by affecting their development, quiescence, and differentiation. This is Interferon gamma (IFNG) from Pan troglodytes (Chimpanzee).